A 111-amino-acid chain; its full sequence is Cyclin-dependent protein kinase inhibitor SMR2 (111 aa).

The segment at 1–66 is disordered; the sequence is MSKLLETLEE…PPPRKRPREI (66 aa). Positions 10-35 are enriched in basic and acidic residues; that stretch reads EEKTVEQKPRSQEEEDHQDSSKKEEL.

Interacts with CYCD2-1. Interacts with CDKB1-1. Expressed at low levels in roots and stems. Expressed in the root vascular tissue.

It is found in the nucleus. Functionally, cyclin-dependent protein kinase (CDK) inhibitor that restricts cell proliferation and cooperates with SIM and SMR1 to promote endoreplication during leaf development. The polypeptide is Cyclin-dependent protein kinase inhibitor SMR2 (Arabidopsis thaliana (Mouse-ear cress)).